A 178-amino-acid chain; its full sequence is MKTAKGKDKVKTTKEALKPVDDRKVGKRKAPAEKPTKRETRKEKKAKKDPNKPKRAPSAFFVFLEDFRVTFKKENPNVKAVSAVGKAGGQKWKSMSQAEKAPYEEKAAKRKAEYEKQMDAYNKNLEEGSDESEKSRSEINDEDEASGEEELLEKEAAGDDEEEEEEEDDDDDDDEEED.

Basic and acidic residues-rich tracts occupy residues 1-52 (MKTA…DPNK) and 101-118 (APYE…EKQM). Disordered regions lie at residues 1 to 59 (MKTA…APSA) and 75 to 178 (NPNV…EEED). The HMG box DNA-binding region spans 53–122 (PKRAPSAFFV…EYEKQMDAYN (70 aa)). Phosphoserine is present on residues S137 and S146. Over residues 140-178 (NDEDEASGEEELLEKEAAGDDEEEEEEEDDDDDDDEEED) the composition is skewed to acidic residues.

Belongs to the HMGB family. Expressed in cotyledons, roots, stems, leaves and flowers (excluding pedicels).

The protein resides in the nucleus. Its function is as follows. Binds preferentially double-stranded DNA. Modulates general plant growth and stress tolerance. Confers sensitivity to salt and genotoxic (methyl methanesulfonate, MMS) stresses. The sequence is that of High mobility group B protein 1 (HMGB1) from Arabidopsis thaliana (Mouse-ear cress).